We begin with the raw amino-acid sequence, 249 residues long: UPF0758 protein BMEI0718 (249 aa).

The interval 1 to 34 (MAKKKDTPGDGEFPGFSDTLQRTPKLEKPHYAGH) is disordered. A compositionally biased stretch (basic and acidic residues) spans 24–34 (PKLEKPHYAGH). Residues 127–249 (VLGSWDKVIN…HASLRSLRLI (123 aa)) form the MPN domain. The Zn(2+) site is built by H198, H200, and D211. Residues 198-211 (HNHPSGDPTPSRAD) carry the JAMM motif motif.

Belongs to the UPF0758 family.

The polypeptide is UPF0758 protein BMEI0718 (Brucella melitensis biotype 1 (strain ATCC 23456 / CCUG 17765 / NCTC 10094 / 16M)).